The primary structure comprises 1279 residues: Talin-A (1279 aa).

Residues 84–365 (RPQKFKLLDG…GYIEIIMKAR (282 aa)) form the FERM domain.

Its subcellular location is the cytoplasm. The protein resides in the cytoskeleton. The protein localises to the cell cortex. Actin-binding protein that may be involved in the control of cell motility and chemotaxis. This Dictyostelium discoideum (Social amoeba) protein is Talin-A (talA).